A 364-amino-acid chain; its full sequence is MKPFPRAEISSRALKANLKRLRQIAPGSKVMAVVKANGYGHGLLNVAEVLTDAHSNADADGFGLARLEEALEVRAGGVSARLLLLEGFFRSEDLPLLVEHDIDTVVHHVSQLDMLESVSLSKPVTVWLKIDSGMHRLGFHASEFKDVYQRLQQNPNVAKPVHLMTHFSCADEPQKDFTATQMAHFNALTQGLPGDRTLANSAGVLYWPQSQADWIRPGIALYGVSPVAGDLGSNHGLEPAMELVSQLIAVREHSAGESVGYGAYWTASRDTRLGVVAIGYGDGYPRNAPEGTPVLVNGRRVPIVGRVSMDMLTVDLGPDAADKVGDRALLWGKELPVEEVAERIGTIAYELVTKLTPRVAVCLD.

The Proton acceptor; specific for D-alanine role is filled by lysine 35. At lysine 35 the chain carries N6-(pyridoxal phosphate)lysine. Arginine 136 provides a ligand contact to substrate. Tyrosine 261 (proton acceptor; specific for L-alanine) is an active-site residue. Position 309 (methionine 309) interacts with substrate.

The protein belongs to the alanine racemase family. Requires pyridoxal 5'-phosphate as cofactor.

The catalysed reaction is L-alanine = D-alanine. It functions in the pathway amino-acid biosynthesis; D-alanine biosynthesis; D-alanine from L-alanine: step 1/1. Its function is as follows. Catalyzes the interconversion of L-alanine and D-alanine. May also act on other amino acids. In Shewanella amazonensis (strain ATCC BAA-1098 / SB2B), this protein is Alanine racemase (alr).